A 187-amino-acid chain; its full sequence is Hypoxanthine/guanine phosphoribosyltransferase (187 aa).

Belongs to the purine/pyrimidine phosphoribosyltransferase family. Archaeal HPRT subfamily. In terms of assembly, homodimer.

The protein localises to the cytoplasm. The catalysed reaction is IMP + diphosphate = hypoxanthine + 5-phospho-alpha-D-ribose 1-diphosphate. It catalyses the reaction GMP + diphosphate = guanine + 5-phospho-alpha-D-ribose 1-diphosphate. It participates in purine metabolism; IMP biosynthesis via salvage pathway; IMP from hypoxanthine: step 1/1. In terms of biological role, catalyzes a salvage reaction resulting in the formation of IMP that is energically less costly than de novo synthesis. This chain is Hypoxanthine/guanine phosphoribosyltransferase, found in Methanococcus voltae (strain ATCC BAA-1334 / A3).